Here is a 310-residue protein sequence, read N- to C-terminus: Beta-ketoacyl-[acyl-carrier-protein] synthase III (310 aa).

Active-site residues include Cys112 and His235. An ACP-binding region spans residues 236–240 (QANIR). Asn265 is a catalytic residue.

It belongs to the thiolase-like superfamily. FabH family. In terms of assembly, homodimer.

It is found in the cytoplasm. It catalyses the reaction malonyl-[ACP] + acetyl-CoA + H(+) = 3-oxobutanoyl-[ACP] + CO2 + CoA. It participates in lipid metabolism; fatty acid biosynthesis. In terms of biological role, catalyzes the condensation reaction of fatty acid synthesis by the addition to an acyl acceptor of two carbons from malonyl-ACP. Catalyzes the first condensation reaction which initiates fatty acid synthesis and may therefore play a role in governing the total rate of fatty acid production. Possesses both acetoacetyl-ACP synthase and acetyl transacylase activities. Its substrate specificity determines the biosynthesis of branched-chain and/or straight-chain of fatty acids. In Geobacillus kaustophilus (strain HTA426), this protein is Beta-ketoacyl-[acyl-carrier-protein] synthase III.